Reading from the N-terminus, the 374-residue chain is Pectate lyase 3 (374 aa).

An N-terminal signal peptide occupies residues 1-22 (MKYLLPSAAAGLLLLAAQPTMA). Cysteines 93 and 176 form a disulfide. Residues Asp150, Asp152, Glu187, and Asp191 each contribute to the Ca(2+) site. Arg239 is a catalytic residue. Residues Cys350 and Cys373 are joined by a disulfide bond.

Belongs to the polysaccharide lyase 1 family. PLADES subfamily. It depends on Ca(2+) as a cofactor.

It localises to the secreted. It catalyses the reaction Eliminative cleavage of (1-&gt;4)-alpha-D-galacturonan to give oligosaccharides with 4-deoxy-alpha-D-galact-4-enuronosyl groups at their non-reducing ends.. The protein operates within glycan metabolism; pectin degradation; 2-dehydro-3-deoxy-D-gluconate from pectin: step 2/5. Its function is as follows. Involved in maceration and soft-rotting of plant tissue. The chain is Pectate lyase 3 (pel3) from Pectobacterium carotovorum (Erwinia carotovora).